Consider the following 95-residue polypeptide: Acylphosphatase 2 (95 aa).

Positions 6 to 93 (RVIVTVQGRV…PLPPGFEVRP (88 aa)) constitute an Acylphosphatase-like domain. Catalysis depends on residues Arg-21 and Asn-39.

Belongs to the acylphosphatase family.

It carries out the reaction an acyl phosphate + H2O = a carboxylate + phosphate + H(+). The sequence is that of Acylphosphatase 2 (acyP2) from Ralstonia nicotianae (strain ATCC BAA-1114 / GMI1000) (Ralstonia solanacearum).